The following is a 522-amino-acid chain: 2-isopropylmalate synthase (522 aa).

Residues 5-267 form the Pyruvate carboxyltransferase domain; that stretch reads VIIFDTTLRD…ETGINAKEIH (263 aa). Mn(2+)-binding residues include Asp-14, His-202, His-204, and Asn-238. Positions 392-522 are regulatory domain; it reads QLRQLVVQSD…MHKNRELGGV (131 aa).

The protein belongs to the alpha-IPM synthase/homocitrate synthase family. LeuA type 1 subfamily. Homodimer. The cofactor is Mn(2+).

Its subcellular location is the cytoplasm. The catalysed reaction is 3-methyl-2-oxobutanoate + acetyl-CoA + H2O = (2S)-2-isopropylmalate + CoA + H(+). Its pathway is amino-acid biosynthesis; L-leucine biosynthesis; L-leucine from 3-methyl-2-oxobutanoate: step 1/4. Its function is as follows. Catalyzes the condensation of the acetyl group of acetyl-CoA with 3-methyl-2-oxobutanoate (2-ketoisovalerate) to form 3-carboxy-3-hydroxy-4-methylpentanoate (2-isopropylmalate). The sequence is that of 2-isopropylmalate synthase from Shewanella oneidensis (strain ATCC 700550 / JCM 31522 / CIP 106686 / LMG 19005 / NCIMB 14063 / MR-1).